Consider the following 141-residue polypeptide: Hemoglobin subunit alpha (141 aa).

One can recognise a Globin domain in the interval 1-141 (VLSPADKTNV…VSTVLTSKYR (141 aa)). S3 carries the post-translational modification Phosphoserine. K7 is modified (N6-succinyllysine). Position 8 is a phosphothreonine (T8). At K11 the chain carries N6-succinyllysine. Position 16 is an N6-acetyllysine; alternate (K16). K16 carries the N6-succinyllysine; alternate modification. Y24 is modified (phosphotyrosine). S35 is modified (phosphoserine). At K40 the chain carries N6-succinyllysine. The residue at position 49 (S49) is a Phosphoserine. H58 is an O2 binding site. H87 contacts heme b. S102 carries the phosphoserine modification. Residue T108 is modified to Phosphothreonine. The residue at position 124 (S124) is a Phosphoserine. Phosphothreonine occurs at positions 134 and 137. The residue at position 138 (S138) is a Phosphoserine.

This sequence belongs to the globin family. As to quaternary structure, heterotetramer of two alpha chains and two beta chains. As to expression, red blood cells.

In terms of biological role, involved in oxygen transport from the lung to the various peripheral tissues. Functionally, hemopressin acts as an antagonist peptide of the cannabinoid receptor CNR1. Hemopressin-binding efficiently blocks cannabinoid receptor CNR1 and subsequent signaling. The polypeptide is Hemoglobin subunit alpha (HBA) (Lutra lutra (European river otter)).